Here is a 91-residue protein sequence, read N- to C-terminus: Acylphosphatase (91 aa).

The 87-residue stretch at 5 to 91 (RLHAIVEGEV…KGEFTSFDTY (87 aa)) folds into the Acylphosphatase-like domain. Residues Arg-20 and Asn-38 contribute to the active site.

This sequence belongs to the acylphosphatase family.

It catalyses the reaction an acyl phosphate + H2O = a carboxylate + phosphate + H(+). This chain is Acylphosphatase (acyP), found in Metallosphaera sedula (strain ATCC 51363 / DSM 5348 / JCM 9185 / NBRC 15509 / TH2).